The sequence spans 78 residues: Lantibiotic cinnamycin (78 aa).

The propeptide occupies 1 to 59 (MTASILQQSVVDADFRAALLENPAAFGASAAALPTPVEAQDQASLDFWTKDIAATEAFA). 2 cross-links (beta-methyllanthionine (Cys-Thr)) span residues 60 to 77 (CRQSCSFGPFTFVCDGNT) and 64 to 70 (CSFGPFT). Residues 63–73 (SCSFGPFTFVC) constitute a cross-link (lanthionine (Ser-Cys)). A cross-link (lysinoalanine (Ser-Lys)) is located at residues 65–78 (SFGPFTFVCDGNTK). (3R)-3-hydroxyaspartate is present on aspartate 74.

This sequence belongs to the type B lantibiotic family. Post-translationally, maturation of lantibiotics involves the enzymatic conversion of Thr, and Ser into dehydrated AA and the formation of thioether bonds with cysteine or the formation of dialkylamine bonds with lysine. This is followed by membrane translocation and cleavage of the modified precursor.

Can act as inhibitor of the enzyme phospholipase A2, and of the angiotensin-converting enzyme. Shows inhibitory activities against herpes simplex virus and immunopotentiating activities. Its antimicrobial activities are not very pronounced. This is Lantibiotic cinnamycin (cinA) from Streptomyces griseoverticillatus (Streptoverticillium griseoverticillatum).